Here is a 932-residue protein sequence, read N- to C-terminus: DNA mismatch repair protein MutS (932 aa).

615–622 (GPNMAGKS) contributes to the ATP binding site.

The protein belongs to the DNA mismatch repair MutS family.

Functionally, this protein is involved in the repair of mismatches in DNA. It is possible that it carries out the mismatch recognition step. This protein has a weak ATPase activity. In Clostridium botulinum (strain Kyoto / Type A2), this protein is DNA mismatch repair protein MutS.